Reading from the N-terminus, the 474-residue chain is BPI fold-containing family B member 1 (474 aa).

An N-terminal signal peptide occupies residues M1–A21. N153, N160, N263, and N400 each carry an N-linked (GlcNAc...) asparagine glycan. An intrachain disulfide couples C157 to C200.

The protein belongs to the BPI/LBP/Plunc superfamily. Plunc family. Expressed in tongue, lung, thymus, and stomach. Expressed in epithelia of palate, anterior pharynx, trachea and upper bronchi. Expressed in distal tip of papillae in the anterior third of the tongue and in serous cells of von Ebner glands in the posterior third of the tongue. Expressed in columnar epithelium of the duodenum in embryonic gut at 16.5 dpc.

It is found in the secreted. In terms of biological role, may play a role in innate immunity in mouth, nose and lungs. Binds bacterial lipopolysaccharide (LPS) and modulates the cellular responses to LPS. May be involved in formation of the left-right axis in the node of the developing embryo. The protein is BPI fold-containing family B member 1 (Bpifb1) of Mus musculus (Mouse).